Reading from the N-terminus, the 160-residue chain is pH-gated potassium channel KcsA (160 aa).

The Cytoplasmic segment spans residues 1–27 (MPPMLSGLLARLVKLLLGRHGSALHWR). The helical transmembrane segment at 28–50 (AAGAATVLLVIVLLAGSYLAVLA) threads the bilayer. The Extracellular segment spans residues 51 to 61 (ERGAPGAQLIT). Residues 62-72 (YPRALWWSVET) constitute an intramembrane region (helical; Pore-forming). The pore-forming intramembrane region spans 73–80 (ATTVGYGD). The Selectivity filter signature appears at 75–80 (TVGYGD). The Extracellular segment spans residues 81–87 (LYPVTLW). A helical membrane pass occupies residues 88-111 (GRLVAVVVMVAGITSFGLVTAALA). At 112 to 160 (TWFVGREQERRGHFVRHSEKAAEEAYTRTTRALHERFDRLERMLDDNRR) the chain is on the cytoplasmic side.

It belongs to the potassium channel family. Homotetramer.

The protein resides in the cell membrane. Its function is as follows. Acts as a pH-gated potassium ion channel; changing the cytosolic pH from 7 to 4 opens the channel. The chain is pH-gated potassium channel KcsA (kcsA) from Streptomyces coelicolor (strain ATCC BAA-471 / A3(2) / M145).